Reading from the N-terminus, the 1365-residue chain is Polyprotein ABA-1 (1365 aa).

Belongs to the NPA family. Nematode polyprotein allergens (NPAs) are synthesized as large polypeptides that are subsequently proteolytically cleaved to active polypeptide units. As to expression, pseudocoelomic fluid.

Has high binding affinity for fatty acids and retinoids. In Ascaris suum (Pig roundworm), this protein is Polyprotein ABA-1 (ABA-1).